A 456-amino-acid polypeptide reads, in one-letter code: Arginine biosynthesis bifunctional protein ArgJ, mitochondrial (456 aa).

Residues Thr-184, Lys-213, Thr-224, Glu-311, Asn-451, and Thr-456 each contribute to the substrate site. The active-site Nucleophile is Thr-224.

The protein belongs to the ArgJ family. In terms of assembly, heterodimer of an alpha and a beta chain. Post-translationally, the alpha and beta chains are autoproteolytically processed from a single precursor protein within the mitochondrion.

Its subcellular location is the mitochondrion matrix. The enzyme catalyses N(2)-acetyl-L-ornithine + L-glutamate = N-acetyl-L-glutamate + L-ornithine. The catalysed reaction is L-glutamate + acetyl-CoA = N-acetyl-L-glutamate + CoA + H(+). The protein operates within amino-acid biosynthesis; L-arginine biosynthesis; L-ornithine and N-acetyl-L-glutamate from L-glutamate and N(2)-acetyl-L-ornithine (cyclic): step 1/1. Its pathway is amino-acid biosynthesis; L-arginine biosynthesis; N(2)-acetyl-L-ornithine from L-glutamate: step 1/4. Its function is as follows. Catalyzes two activities which are involved in the cyclic version of arginine biosynthesis: the synthesis of acetylglutamate from glutamate and acetyl-CoA, and of ornithine by transacetylation between acetylornithine and glutamate. This is Arginine biosynthesis bifunctional protein ArgJ, mitochondrial from Aspergillus oryzae (strain ATCC 42149 / RIB 40) (Yellow koji mold).